The primary structure comprises 360 residues: Protein phosphatase 1L (360 aa).

Over 1-25 the chain is Extracellular; the sequence is MIEDTMTLLSLLGRIMRYFLLRPET. Residues 26–42 traverse the membrane as a helical segment; the sequence is LFLLCISLALWSYFFHT. Residues 43–360 lie on the Cytoplasmic side of the membrane; sequence DEVKTIVKSS…FRNSSKTEEH (318 aa). The region spanning 92–351 is the PPM-type phosphatase domain; the sequence is NVAVYSIQGR…DNITVMVVKF (260 aa). Mn(2+) is bound by residues D128, G129, D302, and D342.

It belongs to the PP2C family. Interacts with MAP3K7/TAK1 and MAP3K5. Mg(2+) is required as a cofactor. Mn(2+) serves as cofactor. In terms of tissue distribution, expressed in brain, heart, testis, liver, lung and skeletal muscle.

Its subcellular location is the membrane. It carries out the reaction O-phospho-L-seryl-[protein] + H2O = L-seryl-[protein] + phosphate. The catalysed reaction is O-phospho-L-threonyl-[protein] + H2O = L-threonyl-[protein] + phosphate. Its function is as follows. Acts as a suppressor of the SAPK signaling pathways by associating with and dephosphorylating MAP3K7/TAK1 and MAP3K5, and by attenuating the association between MAP3K7/TAK1 and MAP2K4 or MAP2K6. The protein is Protein phosphatase 1L (Ppm1l) of Mus musculus (Mouse).